We begin with the raw amino-acid sequence, 228 residues long: Demethylmenaquinone methyltransferase (228 aa).

Residues Thr62, Asp80, 100–101, and Ser117 contribute to the S-adenosyl-L-methionine site; that span reads DA.

This sequence belongs to the class I-like SAM-binding methyltransferase superfamily. MenG/UbiE family.

The catalysed reaction is a 2-demethylmenaquinol + S-adenosyl-L-methionine = a menaquinol + S-adenosyl-L-homocysteine + H(+). It participates in quinol/quinone metabolism; menaquinone biosynthesis; menaquinol from 1,4-dihydroxy-2-naphthoate: step 2/2. Functionally, methyltransferase required for the conversion of demethylmenaquinol (DMKH2) to menaquinol (MKH2). The protein is Demethylmenaquinone methyltransferase of Mycolicibacterium vanbaalenii (strain DSM 7251 / JCM 13017 / BCRC 16820 / KCTC 9966 / NRRL B-24157 / PYR-1) (Mycobacterium vanbaalenii).